The chain runs to 153 residues: Ribosome maturation factor RimP (153 aa).

The protein belongs to the RimP family.

It is found in the cytoplasm. Required for maturation of 30S ribosomal subunits. The sequence is that of Ribosome maturation factor RimP from Clostridium tetani (strain Massachusetts / E88).